A 367-amino-acid polypeptide reads, in one-letter code: Histone RNA hairpin-binding protein (367 aa).

A compositionally biased stretch (polar residues) spans 1 to 12 (MAQKTPTKGTRS). Disordered regions lie at residues 1 to 24 (MAQKTPTKGTRSSPRKKAWGSPIK) and 49 to 200 (EVTE…HWEE). The span at 57–73 (LASRLEEERRCKSESRR) shows a compositional bias: basic and acidic residues. Residues 147 to 156 (SNASTINEGA) are compositionally biased toward polar residues. Low complexity predominate over residues 183–192 (SDSSSVASSP). The interval 206–275 (CTDEAVLKRR…KWKRSLYEYC (70 aa)) is RNA-binding. The segment at 342-367 (MDESTLKASTNTDPSAPTDFSKMSSH) is disordered. Polar residues predominate over residues 347–356 (LKASTNTDPS).

This sequence belongs to the SLBP family. In terms of processing, ubiquitinated by the CBC(fem-1) (Cul2-ElonginB-ElonginC) E3 ubiquitin-protein ligase complex, leading to its degradation.

Involved in histone pre-mRNA 3' processing. Required for chromosome condensation, progression of cell death and morphogenesis. This Caenorhabditis elegans protein is Histone RNA hairpin-binding protein (cdl-1).